We begin with the raw amino-acid sequence, 430 residues long: Adenylosuccinate synthetase (430 aa).

GTP-binding positions include 12 to 18 (GDEGKGK) and 40 to 42 (GHT). The active-site Proton acceptor is Asp13. Mg(2+) contacts are provided by Asp13 and Gly40. Residues 13 to 16 (DEGK), 38 to 41 (NAGH), Thr128, Arg142, Gln223, Thr238, and Arg302 contribute to the IMP site. His41 acts as the Proton donor in catalysis. 298-304 (TTTGRPR) serves as a coordination point for substrate. Residues Arg304, 330-332 (SID), and 412-414 (SVG) each bind GTP.

This sequence belongs to the adenylosuccinate synthetase family. Homodimer. Mg(2+) is required as a cofactor.

The protein resides in the cytoplasm. It catalyses the reaction IMP + L-aspartate + GTP = N(6)-(1,2-dicarboxyethyl)-AMP + GDP + phosphate + 2 H(+). The protein operates within purine metabolism; AMP biosynthesis via de novo pathway; AMP from IMP: step 1/2. In terms of biological role, plays an important role in the de novo pathway of purine nucleotide biosynthesis. Catalyzes the first committed step in the biosynthesis of AMP from IMP. The protein is Adenylosuccinate synthetase of Streptococcus agalactiae serotype III (strain NEM316).